The sequence spans 258 residues: Small ribosomal subunit protein mS23 (258 aa).

This sequence belongs to the mitochondrion-specific ribosomal protein mS23 family. Component of the mitochondrial small ribosomal subunit.

It localises to the mitochondrion. This chain is Small ribosomal subunit protein mS23, found in Aspergillus fumigatus (strain CBS 144.89 / FGSC A1163 / CEA10) (Neosartorya fumigata).